Reading from the N-terminus, the 456-residue chain is MLPSQSPAIFTVSRLNQTVRLLLEHEMGQVWISGEISNFTQPASGHWYFTLKDDTAQVRCAMFRNSNRRVTFRPQHGQQVLVRANITLYEPRGDYQIIVESMQPAGEGLLQQKYEQLKAKLQAEGLFDQQYKKPLPSPAHCVGVITSKTGAALHDILHVLKRRDPSLPVIIYPAAVQGDDAPGQIVRAIELANQRNECDVLIVGRGGGSLEDLWSFNDERVARAIFTSRIPVVSAVGHETDVTIADFVADLRAPTPSAAAEVVSRNQQELLRQVQSTRQRLEMAMDYYLANRTRRFTQIHHRLQQQHPQLRLARQQTMLERLQKRMSFALENQLKRTGQQQQRLTQRLNQQNPQPKIHRAQTRIQQLEYRLAETLRAQLSATRERFGNAVTHLEAVSPLSTLARGYSVTTATDGNVLKKVKQVKAGEMLTTRLEDGWIESEVKNIQPVKKSRKKVH.

The tract at residues 1-103 (MLPSQSPAIF…DYQIIVESMQ (103 aa)) is binds ssDNA, also required to bind the small subunit.

This sequence belongs to the XseA family. As to quaternary structure, heterooligomer composed of two different subunits with an approximate ratio of 4:1 for small to large subunit. Also estimated to have a 6:1 ration for small to large subunits. Does not require a metal cofactor. serves as cofactor.

Its subcellular location is the cytoplasm. It carries out the reaction Exonucleolytic cleavage in either 5'- to 3'- or 3'- to 5'-direction to yield nucleoside 5'-phosphates.. In terms of biological role, bidirectionally degrades single-stranded DNA into large acid-insoluble oligonucleotides, which are then degraded further into small acid-soluble oligonucleotides. It can degrade 3' or 5' ss regions extending from the termini of duplex DNA molecules and displaced ss regions. It can also excise thymine dimers in vitro. ssDNA-binding requires both subunits. Required for production of the mature 5'-end of retron Ec78 or Ec83 msDNA. Overproduction of this subunit in the absence of an equivalent quantity of the small subunit is toxic, causing cell elongation and chromosome fragmentation or loss; its toxicity is mostly suppressed by RecA. This is Exodeoxyribonuclease 7 large subunit from Escherichia coli (strain K12).